The primary structure comprises 290 residues: MDKIIKTISENGSFRAYVLDSTETVRTAQEKHQTQASSTVALGRTLIASQILAANEKGQTKITVKVLGTSSLGAIITVADTEGNVKGYVQNPGVDIKKTATGEVLVGPFVGQGEFLVITDYGTGNPYNSMTPLISGEIGEDLAFYLTESQQTPSAVGLNVLLDENDKVKVAGGFLVQVLPGAKEAEIARFEKRIQEMPAISRLLESDDHIEALLAAIYGNEPYKRLSEEEIRFQCDCNKERFMNALATLPKADLEEMRDQDQGAEIVCQFCQTAYHFDQNDLEELIRDKS.

Disulfide bonds link cysteine 235-cysteine 237 and cysteine 268-cysteine 271.

This sequence belongs to the HSP33 family. Post-translationally, under oxidizing conditions two disulfide bonds are formed involving the reactive cysteines. Under reducing conditions zinc is bound to the reactive cysteines and the protein is inactive.

Its subcellular location is the cytoplasm. Redox regulated molecular chaperone. Protects both thermally unfolding and oxidatively damaged proteins from irreversible aggregation. Plays an important role in the bacterial defense system toward oxidative stress. This Streptococcus sanguinis (strain SK36) protein is 33 kDa chaperonin.